The sequence spans 337 residues: Adenine deaminase (337 aa).

3 residues coordinate Zn(2+): His17, His19, and His197. Glu200 serves as the catalytic Proton donor. Asp278 serves as a coordination point for Zn(2+). Asp279 is a substrate binding site.

It belongs to the metallo-dependent hydrolases superfamily. Adenosine and AMP deaminases family. Adenine deaminase type 2 subfamily. Requires Zn(2+) as cofactor.

The enzyme catalyses adenine + H2O + H(+) = hypoxanthine + NH4(+). In terms of biological role, catalyzes the hydrolytic deamination of adenine to hypoxanthine. Plays an important role in the purine salvage pathway and in nitrogen catabolism. The protein is Adenine deaminase of Zymomonas mobilis subsp. mobilis (strain ATCC 31821 / ZM4 / CP4).